The sequence spans 433 residues: Glutamate-1-semialdehyde 2,1-aminomutase (433 aa).

At lysine 272 the chain carries N6-(pyridoxal phosphate)lysine.

Belongs to the class-III pyridoxal-phosphate-dependent aminotransferase family. HemL subfamily. As to quaternary structure, homodimer. It depends on pyridoxal 5'-phosphate as a cofactor.

The protein localises to the cytoplasm. It carries out the reaction (S)-4-amino-5-oxopentanoate = 5-aminolevulinate. The protein operates within porphyrin-containing compound metabolism; protoporphyrin-IX biosynthesis; 5-aminolevulinate from L-glutamyl-tRNA(Glu): step 2/2. This Magnetococcus marinus (strain ATCC BAA-1437 / JCM 17883 / MC-1) protein is Glutamate-1-semialdehyde 2,1-aminomutase.